We begin with the raw amino-acid sequence, 929 residues long: Isoleucine--tRNA ligase (929 aa).

The short motif at 58-68 (PYANGDIHIGH) is the 'HIGH' region element. Glu563 serves as a coordination point for L-isoleucyl-5'-AMP. A 'KMSKS' region motif is present at residues 605-609 (KMSKS). Lys608 is a binding site for ATP. Positions 892, 895, 912, and 915 each coordinate Zn(2+).

It belongs to the class-I aminoacyl-tRNA synthetase family. IleS type 1 subfamily. In terms of assembly, monomer. Requires Zn(2+) as cofactor.

It localises to the cytoplasm. The enzyme catalyses tRNA(Ile) + L-isoleucine + ATP = L-isoleucyl-tRNA(Ile) + AMP + diphosphate. Functionally, catalyzes the attachment of isoleucine to tRNA(Ile). As IleRS can inadvertently accommodate and process structurally similar amino acids such as valine, to avoid such errors it has two additional distinct tRNA(Ile)-dependent editing activities. One activity is designated as 'pretransfer' editing and involves the hydrolysis of activated Val-AMP. The other activity is designated 'posttransfer' editing and involves deacylation of mischarged Val-tRNA(Ile). The sequence is that of Isoleucine--tRNA ligase from Neisseria gonorrhoeae (strain ATCC 700825 / FA 1090).